Here is a 141-residue protein sequence, read N- to C-terminus: Large ribosomal subunit protein uL16 (141 aa).

A compositionally biased stretch (basic residues) spans 1-21; the sequence is MLMPKRTKFRKQMKGRNRGKS. Residues 1-22 form a disordered region; it reads MLMPKRTKFRKQMKGRNRGKSF.

It belongs to the universal ribosomal protein uL16 family. Part of the 50S ribosomal subunit.

Binds 23S rRNA and is also seen to make contacts with the A and possibly P site tRNAs. The polypeptide is Large ribosomal subunit protein uL16 (Wolinella succinogenes (strain ATCC 29543 / DSM 1740 / CCUG 13145 / JCM 31913 / LMG 7466 / NCTC 11488 / FDC 602W) (Vibrio succinogenes)).